Here is a 404-residue protein sequence, read N- to C-terminus: MNVLWGLLGAVAIIAIAFLFSEKKSNIKIRTVIVGLCTQVAFGYIVLKWEAGRAVFLWFSSRVQLLIDYANEGISFIFGPLLKVGDSPAFALSVLPVIIFFSALIAVLYHLKIMQLVFRVIGGGLSKLLGTSKTESLAAAANIFVGQSESPLVIKPLIAGLTRSELFTIMTSGLSAVAGSTLFGYALLGIPIEYLLAASFMAAPAGLVFGKLIIPETEKTQTVKSDFKMDEGEGAANVIDAAAKGASTGLQIALNVGAMLLAFVALIAVVNGILGGAFGLFGLKGVTLESILGYVFSPIAFLIGVPWHEALQAGSYIGQKLVLNEFVAYSNFGSHIGEFSKKTATIISFALCGFANFSSIAIMLGTLGGLAPSRRSDIARLGLKAVLAGTLANLLSAAIAGMFI.

Transmembrane regions (helical) follow at residues 1 to 21 (MNVLWGLLGAVAIIAIAFLFS), 32 to 52 (VIVGLCTQVAFGYIVLKWEAG), 89 to 109 (AFALSVLPVIIFFSALIAVLY), 182 to 202 (LFGYALLGIPIEYLLAASFMA), 261 to 281 (LAFVALIAVVNGILGGAFGLF), 285 to 305 (GVTLESILGYVFSPIAFLIGV), 344 to 364 (ATIISFALCGFANFSSIAIML), and 384 to 404 (KAVLAGTLANLLSAAIAGMFI).

Belongs to the concentrative nucleoside transporter (CNT) (TC 2.A.41) family.

Its subcellular location is the cell membrane. This is an uncharacterized protein from Bacillus subtilis (strain 168).